The primary structure comprises 293 residues: Formamidopyrimidine-DNA glycosylase (293 aa).

Residue proline 2 is the Schiff-base intermediate with DNA of the active site. Glutamate 3 (proton donor) is an active-site residue. The active-site Proton donor; for beta-elimination activity is lysine 58. DNA-binding residues include histidine 104, arginine 127, and arginine 170. The segment at 257–293 (SVYGREGKPCRNPACGGTVERVVQSGRSTFFCASCQT) adopts an FPG-type zinc-finger fold. The active-site Proton donor; for delta-elimination activity is the arginine 283.

The protein belongs to the FPG family. In terms of assembly, monomer. It depends on Zn(2+) as a cofactor.

The catalysed reaction is Hydrolysis of DNA containing ring-opened 7-methylguanine residues, releasing 2,6-diamino-4-hydroxy-5-(N-methyl)formamidopyrimidine.. It catalyses the reaction 2'-deoxyribonucleotide-(2'-deoxyribose 5'-phosphate)-2'-deoxyribonucleotide-DNA = a 3'-end 2'-deoxyribonucleotide-(2,3-dehydro-2,3-deoxyribose 5'-phosphate)-DNA + a 5'-end 5'-phospho-2'-deoxyribonucleoside-DNA + H(+). Its function is as follows. Involved in base excision repair of DNA damaged by oxidation or by mutagenic agents. Acts as a DNA glycosylase that recognizes and removes damaged bases. Has a preference for oxidized purines, such as 7,8-dihydro-8-oxoguanine (8-oxoG). Has AP (apurinic/apyrimidinic) lyase activity and introduces nicks in the DNA strand. Cleaves the DNA backbone by beta-delta elimination to generate a single-strand break at the site of the removed base with both 3'- and 5'-phosphates. The protein is Formamidopyrimidine-DNA glycosylase of Brucella canis (strain ATCC 23365 / NCTC 10854 / RM-666).